Consider the following 732-residue polypeptide: MAP7 domain-containing protein 2 (732 aa).

Position 1 is an N-acetylmethionine (methionine 1). A compositionally biased stretch (gly residues) spans 1 to 10; it reads MERGGGGSGT. 5 disordered regions span residues 1 to 64, 95 to 123, 157 to 186, 210 to 244, and 279 to 509; these read MERG…RREE, WRKL…LREE, PGGH…KRLS, GPLN…GKEA, and EFSG…KQKE. A compositionally biased stretch (basic and acidic residues) spans 49-64; sequence LKSDERQRLAKERREE. Residues 51-146 adopt a coiled-coil conformation; the sequence is SDERQRLAKE…RTQQLELKKK (96 aa). The span at 329-345 shows a compositional bias: basic and acidic residues; the sequence is MPKRKAEKEKSNKEREG. Positions 347–357 are enriched in low complexity; that stretch reads LAQQAAGPQGE. Residues 359–374 are compositionally biased toward basic and acidic residues; that stretch reads ALEKHVVDKHASEKHA. The span at 375 to 386 shows a compositional bias: low complexity; the sequence is AAAGGKAENSAA. The segment covering 404–509 has biased composition (basic and acidic residues); it reads LAEKRRQARL…EKAMIEKQKE (106 aa).

This sequence belongs to the MAP7 family. In terms of assembly, interacts (via N-terminus) with microtubules; facilitates microtubule stabilization. Interacts with kinesin-1 family members, KIF5A, KIF5B and KIF5C.

It is found in the cytoplasm. It localises to the cytoskeleton. Its subcellular location is the microtubule organizing center. The protein resides in the centrosome. The protein localises to the midbody. It is found in the cell projection. It localises to the neuron projection. Its subcellular location is the axon. Functionally, microtubule-stabilizing protein that plays a role in the control of cell motility and neurite outgrowth via direct binding to the microtubule. Acts as a critical cofactor for kinesin transport. In the proximal axon, regulates kinesin-1 family members, KIF5A, KIF5B and KIF5C recruitment to microtubules and contributes to kinesin-1-mediated transport in the axons. The sequence is that of MAP7 domain-containing protein 2 (MAP7D2) from Homo sapiens (Human).